A 102-amino-acid polypeptide reads, in one-letter code: MASRNITVSEASRPALPRHAKLRFDETRQRWVILAPERVLAPDDIAVEILQLCDGARSVSAIIDQLATKYTADRAEIGTDVVAMLQDLADKGFLTEARESAP.

The protein belongs to the PqqD family. In terms of assembly, monomer. Interacts with PqqE.

The protein operates within cofactor biosynthesis; pyrroloquinoline quinone biosynthesis. In terms of biological role, functions as a PqqA binding protein and presents PqqA to PqqE, in the pyrroloquinoline quinone (PQQ) biosynthetic pathway. This Rhodopseudomonas palustris (strain BisB5) protein is PqqA binding protein.